The primary structure comprises 264 residues: RNA-binding protein pos-1 (264 aa).

The interval 56 to 82 (QDKETQNSASQPTSEQSLANRDPCTVP) is disordered. Over residues 61–74 (QNSASQPTSEQSLA) the composition is skewed to polar residues. 2 consecutive C3H1-type zinc fingers follow at residues 98–126 (AFKTALCDAYKRSQACSYGDQCRFAHGVH) and 141–169 (KYKTVLCDKFSMTGNCKYGTRCQFIHKIV). Positions 104, 113, 119, 123, 147, 156, 162, and 166 each coordinate Zn(2+).

In terms of assembly, monomer.

It localises to the cytoplasm. In terms of biological role, RNA-binding protein that coordinates cell fate specification and differentiation during early embryogenesis. Binds to a consensus pos-1 recognition element (PRE) consisting of the sequence 5'-UA(U 2-3)RGD(N 1-3)G-3', where R is any purine, D is A, G, or U, and N is any base. The PRE motif is found within the 3' untranslated region of many maternal transcripts required for early development. Binds to the 3' untranslated region (UTR) of Notch receptor homolog glp-1, thereby repressing glp-1 translation in the posterior blastomeres in the embryo. Binding to glp-1 3' UTR excludes cell fate regulator gld-1 binding to an overlapping binding site in the glp-1 3' UTR. Binds to the neg-1 3'UTR thereby opposing neg-1 expression and cytoplasmic polyadenylation of the neg-1 mRNA poly(A) tail promoted by gld-2 and gld-3. By inhibiting the cytoplasmic lengthening of neg-1 mRNA, restricts the accumulation of neg-1 protein and promotes endo-mesoderm development in anterior blastomeres. Essential for germline specification. The polypeptide is RNA-binding protein pos-1 (Caenorhabditis elegans).